Consider the following 464-residue polypeptide: Citrate synthase 5, mitochondrial (464 aa).

The N-terminal 25 residues, 1-25, are a transit peptide targeting the mitochondrion; the sequence is MVFFRSVSAISRLRSRAVQQSSLSN. Residues His-300, His-346, and Asp-401 contribute to the active site.

The protein belongs to the citrate synthase family.

The protein resides in the mitochondrion matrix. The catalysed reaction is oxaloacetate + acetyl-CoA + H2O = citrate + CoA + H(+). It participates in carbohydrate metabolism; tricarboxylic acid cycle; isocitrate from oxaloacetate: step 1/2. The protein is Citrate synthase 5, mitochondrial (CSY5) of Arabidopsis thaliana (Mouse-ear cress).